The sequence spans 243 residues: Orotidine 5'-phosphate decarboxylase (243 aa).

Substrate contacts are provided by residues Asp16, Lys38, 65–74 (DLKLHDIPNT), Thr120, Arg181, Gln190, Gly210, and Arg211. Lys67 serves as the catalytic Proton donor.

It belongs to the OMP decarboxylase family. Type 1 subfamily. Homodimer.

It carries out the reaction orotidine 5'-phosphate + H(+) = UMP + CO2. The protein operates within pyrimidine metabolism; UMP biosynthesis via de novo pathway; UMP from orotate: step 2/2. In terms of biological role, catalyzes the decarboxylation of orotidine 5'-monophosphate (OMP) to uridine 5'-monophosphate (UMP). In Bradyrhizobium sp. (strain ORS 278), this protein is Orotidine 5'-phosphate decarboxylase.